A 428-amino-acid polypeptide reads, in one-letter code: Flotillin-2 (428 aa).

Glycine 2 carries the N-myristoyl glycine lipid modification. The S-palmitoyl cysteine; by ZDHHC5 moiety is linked to residue cysteine 4. The S-palmitoyl cysteine moiety is linked to residue cysteine 19. Residue cysteine 20 is the site of S-palmitoyl cysteine; by ZDHHC5 attachment. Serine 405 bears the Phosphoserine mark.

It belongs to the band 7/mec-2 family. Flotillin subfamily. As to quaternary structure, heterooligomeric complex of flotillin-1 and flotillin-2 and caveolin-1 and caveolin-2. Interacts with ECPAS. In terms of processing, ZDHHC5-catalyzed palmitoylation predominantly occurs at Cys-4. ZDHHC5-catalyzed palmitoylation may be required for the formation of higher-order complexes and for neurite outgrowth in cultured neural stem cells. As to expression, in skin, expressed in epidermis and epidermal appendages but not in dermis. Expressed in all layers of the epidermis except the basal layer. In hair follicles, expressed in the suprabasal layer but not the basal layer. Also expressed in melanoma and carcinoma cell lines, fibroblasts and foreskin melanocytes.

It localises to the cell membrane. The protein resides in the membrane. The protein localises to the caveola. It is found in the endosome. May act as a scaffolding protein within caveolar membranes, functionally participating in formation of caveolae or caveolae-like vesicles. May be involved in epidermal cell adhesion and epidermal structure and function. In Homo sapiens (Human), this protein is Flotillin-2 (FLOT2).